A 1579-amino-acid polypeptide reads, in one-letter code: Pentafunctional AROM polypeptide (1579 aa).

The segment at 1–383 (MLVKVPILGR…YGKSAHVVSD (383 aa)) is 3-dehydroquinate synthase. Residues 40 to 42 (DSN), 75 to 78 (EANK), 106 to 108 (GGI), and Asp111 contribute to the NAD(+) site. Arg122 is a binding site for 7-phospho-2-dehydro-3-deoxy-D-arabino-heptonate. Residue 131 to 132 (TS) coordinates NAD(+). 7-phospho-2-dehydro-3-deoxy-D-arabino-heptonate is bound by residues Asp138 and Lys144. Lys153 contributes to the NAD(+) binding site. Asn154 serves as a coordination point for 7-phospho-2-dehydro-3-deoxy-D-arabino-heptonate. NAD(+) contacts are provided by residues 171-174 (WLQS) and Asn182. Residue Glu186 participates in Zn(2+) binding. Residues 186–189 (EVIK) and Lys249 contribute to the 7-phospho-2-dehydro-3-deoxy-D-arabino-heptonate site. The Proton acceptor; for 3-dehydroquinate synthase activity role is filled by Glu259. 7-phospho-2-dehydro-3-deoxy-D-arabino-heptonate contacts are provided by residues 263 to 267 (RNLLN) and His270. His270 serves as a coordination point for Zn(2+). The Proton acceptor; for 3-dehydroquinate synthase activity role is filled by His274. Positions 286 and 355 each coordinate 7-phospho-2-dehydro-3-deoxy-D-arabino-heptonate. Zn(2+) is bound at residue His286. An EPSP synthase region spans residues 396–862 (VYPFNNIPRD…WDVLHTELGA (467 aa)). Residue Cys844 is the For EPSP synthase activity of the active site. The segment at 881–1071 (SVVIIGMRAA…IPTRRSAFVC (191 aa)) is shikimate kinase. 886–893 (GMRAAGKT) is a binding site for ATP. The segment at 1072–1284 (LTFENLTEYT…AAPGQLTVAE (213 aa)) is 3-dehydroquinase. The active-site Proton acceptor; for 3-dehydroquinate dehydratase activity is the His1189. The Schiff-base intermediate with substrate; for 3-dehydroquinate dehydratase activity role is filled by Lys1218. A shikimate dehydrogenase region spans residues 1297–1579 (KKDFFVVGSP…KAIYDAVTEI (283 aa)).

The protein in the N-terminal section; belongs to the sugar phosphate cyclases superfamily. Dehydroquinate synthase family. It in the 2nd section; belongs to the EPSP synthase family. In the 3rd section; belongs to the shikimate kinase family. This sequence in the 4th section; belongs to the type-I 3-dehydroquinase family. The protein in the C-terminal section; belongs to the shikimate dehydrogenase family. Homodimer. Zn(2+) serves as cofactor.

It is found in the cytoplasm. It carries out the reaction 7-phospho-2-dehydro-3-deoxy-D-arabino-heptonate = 3-dehydroquinate + phosphate. It catalyses the reaction 3-dehydroquinate = 3-dehydroshikimate + H2O. The catalysed reaction is shikimate + NADP(+) = 3-dehydroshikimate + NADPH + H(+). The enzyme catalyses shikimate + ATP = 3-phosphoshikimate + ADP + H(+). It carries out the reaction 3-phosphoshikimate + phosphoenolpyruvate = 5-O-(1-carboxyvinyl)-3-phosphoshikimate + phosphate. It functions in the pathway metabolic intermediate biosynthesis; chorismate biosynthesis; chorismate from D-erythrose 4-phosphate and phosphoenolpyruvate: step 2/7. It participates in metabolic intermediate biosynthesis; chorismate biosynthesis; chorismate from D-erythrose 4-phosphate and phosphoenolpyruvate: step 3/7. The protein operates within metabolic intermediate biosynthesis; chorismate biosynthesis; chorismate from D-erythrose 4-phosphate and phosphoenolpyruvate: step 4/7. Its pathway is metabolic intermediate biosynthesis; chorismate biosynthesis; chorismate from D-erythrose 4-phosphate and phosphoenolpyruvate: step 5/7. It functions in the pathway metabolic intermediate biosynthesis; chorismate biosynthesis; chorismate from D-erythrose 4-phosphate and phosphoenolpyruvate: step 6/7. In terms of biological role, the AROM polypeptide catalyzes 5 consecutive enzymatic reactions in prechorismate polyaromatic amino acid biosynthesis. This is Pentafunctional AROM polypeptide from Candida glabrata (strain ATCC 2001 / BCRC 20586 / JCM 3761 / NBRC 0622 / NRRL Y-65 / CBS 138) (Yeast).